A 272-amino-acid chain; its full sequence is Small ribosomal subunit protein mS23 (272 aa).

The tract at residues 233–272 (KENASKAAGDASAVSSEKQVEDDVVNFDESTDADQEVLHF) is disordered. Residues 252 to 272 (VEDDVVNFDESTDADQEVLHF) show a composition bias toward acidic residues.

The protein belongs to the mitochondrion-specific ribosomal protein mS23 family. Component of the mitochondrial small ribosomal subunit.

It is found in the mitochondrion. In Candida glabrata (strain ATCC 2001 / BCRC 20586 / JCM 3761 / NBRC 0622 / NRRL Y-65 / CBS 138) (Yeast), this protein is Small ribosomal subunit protein mS23 (RSM25).